Consider the following 108-residue polypeptide: Phosphoribosyl-ATP pyrophosphatase (108 aa).

It belongs to the PRA-PH family.

The protein localises to the cytoplasm. It carries out the reaction 1-(5-phospho-beta-D-ribosyl)-ATP + H2O = 1-(5-phospho-beta-D-ribosyl)-5'-AMP + diphosphate + H(+). It participates in amino-acid biosynthesis; L-histidine biosynthesis; L-histidine from 5-phospho-alpha-D-ribose 1-diphosphate: step 2/9. In Aromatoleum aromaticum (strain DSM 19018 / LMG 30748 / EbN1) (Azoarcus sp. (strain EbN1)), this protein is Phosphoribosyl-ATP pyrophosphatase.